The following is a 205-amino-acid chain: Small ribosomal subunit protein uS4 (205 aa).

Positions 1–16 (MSKRETTKYKIDRRMG) are enriched in basic and acidic residues. The disordered stretch occupies residues 1-46 (MSKRETTKYKIDRRMGENIWGRPKSPVNRRDYGPGQHGQRRKGKLS). Residues 94-157 (SRLDAVIYRA…KQLVLVLESV (64 aa)) form the S4 RNA-binding domain.

Belongs to the universal ribosomal protein uS4 family. As to quaternary structure, part of the 30S ribosomal subunit. Contacts protein S5. The interaction surface between S4 and S5 is involved in control of translational fidelity.

In terms of biological role, one of the primary rRNA binding proteins, it binds directly to 16S rRNA where it nucleates assembly of the body of the 30S subunit. Its function is as follows. With S5 and S12 plays an important role in translational accuracy. The sequence is that of Small ribosomal subunit protein uS4 from Bartonella quintana (strain Toulouse) (Rochalimaea quintana).